A 206-amino-acid polypeptide reads, in one-letter code: Protein GET1 (206 aa).

The Lumenal segment spans residues 1–4 (MPSL). The helical transmembrane segment at 5–24 (LITVLFLNVIIYVVNTVGAA) threads the bilayer. At 25 to 110 (TVDGLLWLLY…TFDMTIKIAR (86 aa)) the chain is on the cytoplasmic side. A coiled-coil region spans residues 75 to 100 (AKLRRRHDKALEAYEAKNNELTQSKS). The helical transmembrane segment at 111–131 (WAATSGLMLFLQFWYSKTPIF) threads the bilayer. Over 132–155 (TLPPGWIPWQVQWVLSFPRAPMGT) the chain is Lumenal. The chain crosses the membrane as a helical span at residues 156–172 (VSIQIWGGACATVVALV). At 173 to 206 (GDAMKASLAYVSKPKIDRIKLGATMEGKEGKKRQ) the chain is on the cytoplasmic side.

It belongs to the WRB/GET1 family. In terms of assembly, interacts with GET3.

It is found in the endoplasmic reticulum membrane. Required for the post-translational delivery of tail-anchored (TA) proteins to the endoplasmic reticulum. Acts as a membrane receptor for soluble GET3, which recognizes and selectively binds the transmembrane domain of TA proteins in the cytosol. The polypeptide is Protein GET1 (Ajellomyces capsulatus (strain G186AR / H82 / ATCC MYA-2454 / RMSCC 2432) (Darling's disease fungus)).